The sequence spans 184 residues: Protein CPn_0803/CP_1068/CPj0803/CpB0832 (184 aa).

Belongs to the chlamydial CPn_0803/CT_584/TC_0873 family.

This Chlamydia pneumoniae (Chlamydophila pneumoniae) protein is Protein CPn_0803/CP_1068/CPj0803/CpB0832.